The chain runs to 244 residues: Adenosine 5'-phosphosulfate reductase (244 aa).

The [4Fe-4S] cluster site is built by Cys-129, Cys-130, Cys-212, and Cys-215. The Nucleophile; cysteine thiosulfonate intermediate role is filled by Cys-240.

It belongs to the PAPS reductase family. CysH subfamily. [4Fe-4S] cluster is required as a cofactor.

The protein resides in the cytoplasm. The enzyme catalyses [thioredoxin]-disulfide + sulfite + AMP + 2 H(+) = adenosine 5'-phosphosulfate + [thioredoxin]-dithiol. Its pathway is sulfur metabolism; hydrogen sulfide biosynthesis; sulfite from sulfate. Its function is as follows. Catalyzes the formation of sulfite from adenosine 5'-phosphosulfate (APS) using thioredoxin as an electron donor. This chain is Adenosine 5'-phosphosulfate reductase, found in Neisseria meningitidis serogroup A / serotype 4A (strain DSM 15465 / Z2491).